We begin with the raw amino-acid sequence, 254 residues long: Cell division protein ZapD (254 aa).

The protein belongs to the ZapD family. In terms of assembly, interacts with FtsZ.

It localises to the cytoplasm. Cell division factor that enhances FtsZ-ring assembly. Directly interacts with FtsZ and promotes bundling of FtsZ protofilaments, with a reduction in FtsZ GTPase activity. The sequence is that of Cell division protein ZapD from Idiomarina loihiensis (strain ATCC BAA-735 / DSM 15497 / L2-TR).